The chain runs to 142 residues: Large ribosomal subunit protein bL17 (142 aa).

Belongs to the bacterial ribosomal protein bL17 family. In terms of assembly, part of the 50S ribosomal subunit. Contacts protein L32.

The polypeptide is Large ribosomal subunit protein bL17 (Methylocella silvestris (strain DSM 15510 / CIP 108128 / LMG 27833 / NCIMB 13906 / BL2)).